Reading from the N-terminus, the 54-residue chain is ComX pheromone (54 aa).

Positions 1–46 (MQEIVGYLVKNPEVLDEVMKGRASLLNIDKDQLKSIVDAFGGLQIY) are excised as a propeptide. Trp-51 carries the 3'-geranyl-2',N2-cyclotryptophan lipid modification.

In terms of assembly, interacts directly with the sensor histidine kinase ComP and stimulates its activity. Post-translationally, trp-51 is modified by isoprenylation, probably by geranylation, which is essential for activity. Modified by the tryptophan prenyltransferase ComQ before export to the extracellular environment. The type of isoprenyl derivative differs among the different pherotypes and depends on ComX primary sequence.

It is found in the secreted. Its function is as follows. Part of a major quorum-sensing system that regulates the development of genetic competence. Acts through the activation of the two-component regulatory system ComP/ComA composed of a sensor histidine kinase, ComP, and a response regulator, ComA. The polypeptide is ComX pheromone (Bacillus mojavensis).